The sequence spans 569 residues: Laccase-14 (569 aa).

The N-terminal stretch at 1-33 is a signal peptide; sequence MEFKLNIPNTIIKTLQTIVFFLFVLLAFQIAEA. 2 Plastocyanin-like domains span residues 41-157 and 167-320; these read KIKS…PKRG and REIP…YKGD. N-linked (GlcNAc...) asparagine glycosylation occurs at Asn-87. Residues His-91, His-93, His-136, and His-138 each contribute to the Cu cation site. 7 N-linked (GlcNAc...) asparagine glycosylation sites follow: Asn-190, Asn-249, Asn-336, Asn-374, Asn-395, Asn-430, and Asn-452. One can recognise a Plastocyanin-like 3 domain in the interval 420–553; it reads DFPRNPPTKF…NTVFIVKDGP (134 aa). The Cu cation site is built by His-470, His-473, His-475, His-532, Cys-533, His-534, His-538, and Met-543.

It belongs to the multicopper oxidase family. Cu cation is required as a cofactor. As to expression, expressed at low levels in flowers and siliques.

It is found in the secreted. It localises to the extracellular space. The protein localises to the apoplast. The catalysed reaction is 4 hydroquinone + O2 = 4 benzosemiquinone + 2 H2O. Its function is as follows. Lignin degradation and detoxification of lignin-derived products. This Arabidopsis thaliana (Mouse-ear cress) protein is Laccase-14 (LAC14).